We begin with the raw amino-acid sequence, 455 residues long: Pup--protein ligase (455 aa).

Mg(2+) is bound at residue Glu-12. Arg-56 contributes to the ATP binding site. Residue Tyr-58 coordinates Mg(2+). The active-site Proton acceptor is Asp-60. A Mg(2+)-binding site is contributed by Glu-66. Positions 69 and 422 each coordinate ATP.

This sequence belongs to the Pup ligase/Pup deamidase family. Pup-conjugating enzyme subfamily.

It carries out the reaction ATP + [prokaryotic ubiquitin-like protein]-L-glutamate + [protein]-L-lysine = ADP + phosphate + N(6)-([prokaryotic ubiquitin-like protein]-gamma-L-glutamyl)-[protein]-L-lysine.. It functions in the pathway protein degradation; proteasomal Pup-dependent pathway. Its pathway is protein modification; protein pupylation. Catalyzes the covalent attachment of the prokaryotic ubiquitin-like protein modifier Pup to the proteasomal substrate proteins, thereby targeting them for proteasomal degradation. This tagging system is termed pupylation. The ligation reaction involves the side-chain carboxylate of the C-terminal glutamate of Pup and the side-chain amino group of a substrate lysine. The sequence is that of Pup--protein ligase from Acidimicrobium ferrooxidans (strain DSM 10331 / JCM 15462 / NBRC 103882 / ICP).